The following is a 269-amino-acid chain: 3-deoxy-manno-octulosonate cytidylyltransferase (269 aa).

This sequence belongs to the KdsB family.

Its subcellular location is the cytoplasm. The enzyme catalyses 3-deoxy-alpha-D-manno-oct-2-ulosonate + CTP = CMP-3-deoxy-beta-D-manno-octulosonate + diphosphate. It functions in the pathway nucleotide-sugar biosynthesis; CMP-3-deoxy-D-manno-octulosonate biosynthesis; CMP-3-deoxy-D-manno-octulosonate from 3-deoxy-D-manno-octulosonate and CTP: step 1/1. The protein operates within bacterial outer membrane biogenesis; lipopolysaccharide biosynthesis. In terms of biological role, activates KDO (a required 8-carbon sugar) for incorporation into bacterial lipopolysaccharide in Gram-negative bacteria. This is 3-deoxy-manno-octulosonate cytidylyltransferase from Cupriavidus necator (strain ATCC 17699 / DSM 428 / KCTC 22496 / NCIMB 10442 / H16 / Stanier 337) (Ralstonia eutropha).